Consider the following 398-residue polypeptide: S-adenosylmethionine synthase (398 aa).

Position 17 (His-17) interacts with ATP. Asp-19 contacts Mg(2+). Residue Glu-45 coordinates K(+). L-methionine-binding residues include Glu-58 and Gln-101. The segment at Gln-101–Thr-111 is flexible loop. ATP is bound by residues Asp-176 to Lys-178, Arg-243 to Phe-244, Asp-252, Arg-258 to Lys-259, and Lys-279. Asp-252 is an L-methionine binding site. Lys-283 is an L-methionine binding site.

This sequence belongs to the AdoMet synthase family. Homotetramer; dimer of dimers. Mg(2+) serves as cofactor. Requires K(+) as cofactor.

The protein resides in the cytoplasm. It catalyses the reaction L-methionine + ATP + H2O = S-adenosyl-L-methionine + phosphate + diphosphate. It functions in the pathway amino-acid biosynthesis; S-adenosyl-L-methionine biosynthesis; S-adenosyl-L-methionine from L-methionine: step 1/1. Functionally, catalyzes the formation of S-adenosylmethionine (AdoMet) from methionine and ATP. The overall synthetic reaction is composed of two sequential steps, AdoMet formation and the subsequent tripolyphosphate hydrolysis which occurs prior to release of AdoMet from the enzyme. This chain is S-adenosylmethionine synthase, found in Staphylococcus saprophyticus subsp. saprophyticus (strain ATCC 15305 / DSM 20229 / NCIMB 8711 / NCTC 7292 / S-41).